We begin with the raw amino-acid sequence, 459 residues long: tRNA modification GTPase MnmE (459 aa).

Positions 21, 84, and 123 each coordinate (6S)-5-formyl-5,6,7,8-tetrahydrofolate. Residues 219-380 enclose the TrmE-type G domain; sequence GMLTVIVGQP…LEKEIKQRVY (162 aa). Asparagine 229 lines the K(+) pocket. GTP is bound by residues 229–234, 248–254, and 273–276; these read NVGKSS, TDIPGTT, and DTAG. Position 233 (serine 233) interacts with Mg(2+). Residues threonine 248, isoleucine 250, and threonine 253 each coordinate K(+). Position 254 (threonine 254) interacts with Mg(2+). Residue lysine 459 participates in (6S)-5-formyl-5,6,7,8-tetrahydrofolate binding.

This sequence belongs to the TRAFAC class TrmE-Era-EngA-EngB-Septin-like GTPase superfamily. TrmE GTPase family. Homodimer. Heterotetramer of two MnmE and two MnmG subunits. K(+) serves as cofactor.

The protein resides in the cytoplasm. Functionally, exhibits a very high intrinsic GTPase hydrolysis rate. Involved in the addition of a carboxymethylaminomethyl (cmnm) group at the wobble position (U34) of certain tRNAs, forming tRNA-cmnm(5)s(2)U34. The protein is tRNA modification GTPase MnmE of Desulfitobacterium hafniense (strain Y51).